Consider the following 225-residue polypeptide: MDVVFALGGSVLMPKEGASTENIQNYAEAFKKLKEMGHRVSVVVGGGNTARQYISVAREFTNESFCDEIGILATRMNSMLLISALGKDAVKHVPENFKDAELILNMDKILVMGGTHPAHTTDAVSATLAEFIDADLLVIATNVDGVYDKDPRCNEDAVKLDKINTKELLEITGSASMSAGSSGVVDPLASKIIDRAKLKTIVVKGIPEEILASVTENHNGTTITP.

9-10 is an ATP binding site; that stretch reads GS. UMP is bound at residue Gly46. ATP contacts are provided by Gly47 and Arg51. UMP-binding positions include Asp67 and 115–121; that span reads THPAHTT. Thr141, Asn142, Tyr147, and Asp150 together coordinate ATP.

It belongs to the UMP kinase family. As to quaternary structure, homohexamer.

It is found in the cytoplasm. It catalyses the reaction UMP + ATP = UDP + ADP. Its pathway is pyrimidine metabolism; CTP biosynthesis via de novo pathway; UDP from UMP (UMPK route): step 1/1. Inhibited by UTP. Its function is as follows. Catalyzes the reversible phosphorylation of UMP to UDP. The chain is Uridylate kinase from Methanococcus maripaludis (strain C6 / ATCC BAA-1332).